Consider the following 320-residue polypeptide: Olfactory receptor 12D1 (320 aa).

Residues 1–23 (MLNTTSVTEFLLLGVTDIQELQP) are Extracellular-facing. Asparagine 3 is a glycosylation site (N-linked (GlcNAc...) asparagine). The helical transmembrane segment at 24–44 (FLFVVFLTIYFISVAGNGAIL) threads the bilayer. The Cytoplasmic portion of the chain corresponds to 45 to 55 (MIVISDPRLHS). The chain crosses the membrane as a helical span at residues 56 to 76 (PMYFFLGNLSCLDICYSSVTL). Residues 77–97 (PKMLQNFLSAHKAISFLGCIS) are Extracellular-facing. Cysteine 95 and cysteine 177 are joined by a disulfide. The helical transmembrane segment at 98–118 (QLHFFHFLGSTEAMLLAVMAF) threads the bilayer. At 119–141 (DRFVAICKPLRYTVIMNPQLCTQ) the chain is on the cytoplasmic side. Residues 142–162 (MAITIWMIGFFHALLHSLMTS) traverse the membrane as a helical segment. The Extracellular portion of the chain corresponds to 163–203 (RLNFCGSNRIYHFFCDVKPLLKLACGNTELNQWLLSTVTGT). A helical transmembrane segment spans residues 204 to 224 (IAMGPFFLTLLSYFYIITHLF). Residues 225-238 (FKTHSFSMLRKALS) are Cytoplasmic-facing. Residues 239–259 (TCASHFMVVILLYAPVLFTYI) traverse the membrane as a helical segment. The Extracellular portion of the chain corresponds to 260–270 (HHASGTSMDQD). Residues 271-291 (RITAIMYTVVTPVLNPLIYTL) traverse the membrane as a helical segment. Over 292 to 320 (RNKEVKGAFNRAMKRWLWPKEILKNSSEA) the chain is Cytoplasmic.

This sequence belongs to the G-protein coupled receptor 1 family.

It localises to the cell membrane. In terms of biological role, odorant receptor. The chain is Olfactory receptor 12D1 (OR12D1) from Homo sapiens (Human).